The following is a 412-amino-acid chain: D-xylonate dehydratase (412 aa).

Homooctamer.

The catalysed reaction is D-xylonate = 2-dehydro-3-deoxy-D-arabinonate + H2O. Its function is as follows. NADP-dependent D-xylose dehydrogenase involved in the degradation of D-xylose, a major component of hemicelluloses such as xylan. Catalyzes the third reaction in the xylose utilization pathway through dehydratation of D-xylonate into 2-dehydro-3-deoxy-D-xylonate. The protein is D-xylonate dehydratase of Haloferax volcanii (strain ATCC 29605 / DSM 3757 / JCM 8879 / NBRC 14742 / NCIMB 2012 / VKM B-1768 / DS2) (Halobacterium volcanii).